The sequence spans 794 residues: Phosphoribosylformylglycinamidine synthase subunit PurL (794 aa).

Histidine 47 is an active-site residue. Positions 50 and 89 each coordinate ATP. Position 91 (glutamate 91) interacts with Mg(2+). Substrate is bound by residues 92–95 and arginine 114; that span reads SHNH. Catalysis depends on histidine 93, which acts as the Proton acceptor. A Mg(2+)-binding site is contributed by aspartate 115. Residue glutamine 238 coordinates substrate. Aspartate 266 lines the Mg(2+) pocket. Residue 310-312 participates in substrate binding; sequence ESQ. ATP is bound by residues aspartate 522 and glycine 559. Asparagine 560 contributes to the Mg(2+) binding site. Residue serine 562 coordinates substrate.

It belongs to the FGAMS family. Monomer. Part of the FGAM synthase complex composed of 1 PurL, 1 PurQ and 2 PurS subunits.

It is found in the cytoplasm. The enzyme catalyses N(2)-formyl-N(1)-(5-phospho-beta-D-ribosyl)glycinamide + L-glutamine + ATP + H2O = 2-formamido-N(1)-(5-O-phospho-beta-D-ribosyl)acetamidine + L-glutamate + ADP + phosphate + H(+). The protein operates within purine metabolism; IMP biosynthesis via de novo pathway; 5-amino-1-(5-phospho-D-ribosyl)imidazole from N(2)-formyl-N(1)-(5-phospho-D-ribosyl)glycinamide: step 1/2. Part of the phosphoribosylformylglycinamidine synthase complex involved in the purines biosynthetic pathway. Catalyzes the ATP-dependent conversion of formylglycinamide ribonucleotide (FGAR) and glutamine to yield formylglycinamidine ribonucleotide (FGAM) and glutamate. The FGAM synthase complex is composed of three subunits. PurQ produces an ammonia molecule by converting glutamine to glutamate. PurL transfers the ammonia molecule to FGAR to form FGAM in an ATP-dependent manner. PurS interacts with PurQ and PurL and is thought to assist in the transfer of the ammonia molecule from PurQ to PurL. This Prochlorococcus marinus (strain MIT 9303) protein is Phosphoribosylformylglycinamidine synthase subunit PurL.